A 436-amino-acid chain; its full sequence is Glutamyl-tRNA reductase (436 aa).

Substrate is bound by residues 50–53 (TCNR), serine 110, 115–117 (ETQ), and glutamine 121. Cysteine 51 (nucleophile) is an active-site residue. 190 to 195 (GLGEMS) contributes to the NADP(+) binding site.

Belongs to the glutamyl-tRNA reductase family. As to quaternary structure, homodimer.

It catalyses the reaction (S)-4-amino-5-oxopentanoate + tRNA(Glu) + NADP(+) = L-glutamyl-tRNA(Glu) + NADPH + H(+). The protein operates within porphyrin-containing compound metabolism; protoporphyrin-IX biosynthesis; 5-aminolevulinate from L-glutamyl-tRNA(Glu): step 1/2. Functionally, catalyzes the NADPH-dependent reduction of glutamyl-tRNA(Glu) to glutamate 1-semialdehyde (GSA). In Wolinella succinogenes (strain ATCC 29543 / DSM 1740 / CCUG 13145 / JCM 31913 / LMG 7466 / NCTC 11488 / FDC 602W) (Vibrio succinogenes), this protein is Glutamyl-tRNA reductase.